The primary structure comprises 251 residues: Acidic leucine-rich nuclear phosphoprotein 32 family member B (251 aa).

3 LRR repeats span residues 16–40 (PAAV…LTAE), 43–64 (NLEF…PKLP), and 65–84 (KLKK…DMLA). Position 86 is an N6-acetyllysine (Lys-86). One copy of the LRR 4 repeat lies at 89–110 (NLTHLNLSGNKLKDISTLEPLK). The region spanning 123–161 (CEVTNLNDYRESVFKLLPQLTYLDGYDREDQEAPDSDAE) is the LRRCT domain. Over residues 149-233 (DREDQEAPDS…DEDEDEEEEE (85 aa)) the composition is skewed to acidic residues. Positions 149–251 (DREDQEAPDS…RETDDEGEDD (103 aa)) are disordered. Position 158 is a phosphoserine (Ser-158). Residues 234–244 (GGKGEKRKRET) are compositionally biased toward basic and acidic residues. The Nuclear localization signal signature appears at 239–242 (KRKR). Phosphothreonine is present on Thr-244.

It belongs to the ANP32 family. In terms of assembly, interacts with histones H3 and H4. Interacts with KLF5; this interaction induces promoter region-specific histone incorporation and inhibition of histone acetylation by ANP32B. (Microbial infection) Interacts with Sendai virus protein M. As to quaternary structure, (Microbial infection) Interacts with Measles virus protein M. In terms of assembly, (Microbial infection) Interacts with Hendra virus protein M; this interaction promotes nuclear localization of M. (Microbial infection) Interacts with influenza virus B protein PB2; this interaction strongly supports influenza B virus replication. Post-translationally, some glutamate residues are glycylated by TTLL8. This modification occurs exclusively on glutamate residues and results in a glycine chain on the gamma-carboxyl group. Directly cleaved by caspase-3/CASP3. Expressed in heart, lung, pancreas, prostate and in spleen, thymus and placenta.

It is found in the nucleus. It localises to the cytoplasm. Its function is as follows. Multifunctional protein that is involved in the regulation of many processes including cell proliferation, apoptosis, cell cycle progression or transcription. Regulates the proliferation of neuronal stem cells, differentiation of leukemic cells and progression from G1 to S phase of the cell cycle. As negative regulator of caspase-3-dependent apoptosis, may act as an antagonist of ANP32A in regulating tissue homeostasis. Exhibits histone chaperone properties, able to recruit histones to certain promoters, thus regulating the transcription of specific genes. Also plays an essential role in the nucleocytoplasmic transport of specific mRNAs via the uncommon nuclear mRNA export receptor XPO1/CRM1. Participates in the regulation of adequate adaptive immune responses by acting on mRNA expression and cell proliferation. In terms of biological role, (Microbial infection) Plays an essential role in influenza A and B viral genome replication. Also plays a role in foamy virus mRNA export from the nucleus to the cytoplasm. This Homo sapiens (Human) protein is Acidic leucine-rich nuclear phosphoprotein 32 family member B (ANP32B).